The following is a 225-amino-acid chain: Enolase-phosphatase E1 (225 aa).

Belongs to the HAD-like hydrolase superfamily. MasA/MtnC family. As to quaternary structure, monomer. It depends on Mg(2+) as a cofactor.

It carries out the reaction 5-methylsulfanyl-2,3-dioxopentyl phosphate + H2O = 1,2-dihydroxy-5-(methylsulfanyl)pent-1-en-3-one + phosphate. It participates in amino-acid biosynthesis; L-methionine biosynthesis via salvage pathway; L-methionine from S-methyl-5-thio-alpha-D-ribose 1-phosphate: step 3/6. Its pathway is amino-acid biosynthesis; L-methionine biosynthesis via salvage pathway; L-methionine from S-methyl-5-thio-alpha-D-ribose 1-phosphate: step 4/6. In terms of biological role, bifunctional enzyme that catalyzes the enolization of 2,3-diketo-5-methylthiopentyl-1-phosphate (DK-MTP-1-P) into the intermediate 2-hydroxy-3-keto-5-methylthiopentenyl-1-phosphate (HK-MTPenyl-1-P), which is then dephosphorylated to form the acireductone 1,2-dihydroxy-3-keto-5-methylthiopentene (DHK-MTPene). This Shewanella piezotolerans (strain WP3 / JCM 13877) protein is Enolase-phosphatase E1.